A 399-amino-acid polypeptide reads, in one-letter code: Glutathione S-transferase LANCL1 (399 aa).

N-acetylalanine is present on A2. K142 is subject to N6-acetyllysine. C276 contacts Zn(2+). K317 is a glutathione binding site. Positions 322 and 323 each coordinate Zn(2+). A glutathione-binding site is contributed by 364–367 (RTPD).

Belongs to the LanC-like protein family. As to quaternary structure, interacts with the C-terminal of STOM. Interacts with the EPS8 SH3 domain. Interaction with EPS8 is inhibited by glutathione binding. (Microbial infection) Interacts with P.falciparum SBP1. In terms of tissue distribution, detected in erythrocytes, brain, kidney, testis, ovary, heart, lung, placenta and spleen (at protein level). Ubiquitous. Strongly expressed in brain, spinal cord, pituitary gland, kidney, heart, skeletal muscle, pancreas, ovary and testis.

The protein resides in the cytoplasm. It localises to the cell membrane. It carries out the reaction RX + glutathione = an S-substituted glutathione + a halide anion + H(+). The enzyme catalyses 1-chloro-2,4-dinitrobenzene + glutathione = 2,4-dinitrophenyl-S-glutathione + chloride + H(+). Functionally, functions as a glutathione transferase. Catalyzes conjugation of the glutathione (GSH) to artificial substrates 1-chloro-2,4-dinitrobenzene (CDNB) and p-nitrophenyl acetate. Mitigates neuronal oxidative stress during normal postnatal development and in response to oxidative stresses probably through GSH antioxidant defense mechanism. May play a role in EPS8 signaling. Binds glutathione. The chain is Glutathione S-transferase LANCL1 from Homo sapiens (Human).